Consider the following 335-residue polypeptide: Probable E3 ubiquitin-protein ligase BAH1-like (335 aa).

The SPX domain occupies 1–163; that stretch reads MKFGETFTEY…SSENGKNFKL (163 aa). The RING-type zinc finger occupies 231–280; it reads CAICLETVFNPYALKCGHIFCNSCACSAASVLIFQGIKAAPRHSKCPICR.

The protein belongs to the RING-type zinc finger family.

It catalyses the reaction S-ubiquitinyl-[E2 ubiquitin-conjugating enzyme]-L-cysteine + [acceptor protein]-L-lysine = [E2 ubiquitin-conjugating enzyme]-L-cysteine + N(6)-ubiquitinyl-[acceptor protein]-L-lysine.. The protein operates within protein modification; protein ubiquitination. In Arabidopsis thaliana (Mouse-ear cress), this protein is Probable E3 ubiquitin-protein ligase BAH1-like (RF178).